Consider the following 1331-residue polypeptide: Beta-mannanase/endoglucanase A (1331 aa).

Residues 1-41 (MRLKTKIRKKWLSVLCTVVFLLNILFIANVTILPKVGAATS) form the signal peptide. The segment at 42 to 325 (NDGVVKIDTS…YKTNAIGTSS (284 aa)) is catalytic (mannanase). The active-site Proton donor is E162. The Nucleophile role is filled by E257. Disordered regions lie at residues 319 to 363 (NAIG…TPAT), 515 to 566 (PSGA…TPAT), and 717 to 780 (EPSG…PLPT). Positions 323–335 (TSSTPTPTSTVTP) are enriched in low complexity. In terms of domain architecture, CBM3 1 spans 363–516 (TSGQIKVLYA…GVLVWGQEPS (154 aa)). 2 stretches are compositionally biased toward pro residues: residues 521-541 (APAPTATPTPTPTVTPTPTVT) and 551-561 (TPTPTPTPTPV). A CBM3 2 domain is found at 566-719 (TGGQIKVLYA…GVLVWGQEPS (154 aa)). The segment covering 721–735 (TTPSPTSTPTVTVTP) has biased composition (low complexity). Pro residues-rich tracts occupy residues 736–756 (TPTPTPTPTPTPTVTPTPTVT) and 766–780 (TPTPTPIPTVTPLPT). Residues 781 to 1331 (ISPSPSVVEI…RNLVFMRALV (551 aa)) are catalytic (endoglucanase).

In the N-terminal section; belongs to the glycosyl hydrolase 5 (cellulase A) family. It in the C-terminal section; belongs to the glycosyl hydrolase 44 (cellulase J) family.

It catalyses the reaction Random hydrolysis of (1-&gt;4)-beta-D-mannosidic linkages in mannans, galactomannans and glucomannans.. It carries out the reaction Endohydrolysis of (1-&gt;4)-beta-D-glucosidic linkages in cellulose, lichenin and cereal beta-D-glucans.. Functionally, degradation of hemicelluloses, the second most abundant polysaccharides in nature. Contains two catalytic domains with mannanase and endoglucanase activities. The chain is Beta-mannanase/endoglucanase A (manA) from Caldicellulosiruptor saccharolyticus (Caldocellum saccharolyticum).